Here is a 72-residue protein sequence, read N- to C-terminus: Antitoxin VapB11 (72 aa).

In terms of biological role, antitoxin component of a type II toxin-antitoxin (TA) system. This is Antitoxin VapB11 (vapB11) from Mycobacterium tuberculosis (strain CDC 1551 / Oshkosh).